The primary structure comprises 474 residues: Stabilizer of axonemal microtubules 1 (474 aa).

Mn regions lie at residues 30–64 (KPCL…KGSI), 65–97 (PMEG…PSEE), 98–131 (NMDL…PYSN), 132–165 (KMEY…PASV), 166–199 (RFDN…LCNI), 200–232 (PLED…PCEI), 233–266 (PFES…GLDM), 267–299 (PFSN…PPED), 300–332 (SMDL…RKSG), 333–366 (RFEG…FPTE), 367–400 (PLDC…RGNV), and 401–434 (PVEG…TFEE). Positions 318–350 (PARSCRPAPQIRKSGRFEGSSTTKDDYKQWSSM) are disordered. Residues 444–474 (KPVSQAGSQQSSHLSVDDSENPSQRKLEVSA) are disordered. Over residues 448 to 457 (QAGSQQSSHL) the composition is skewed to polar residues.

This sequence belongs to the FAM154 family. In terms of assembly, associates with microtubules via the Mn regions.

The protein resides in the cytoplasm. It localises to the cytoskeleton. Its subcellular location is the microtubule organizing center. It is found in the centrosome. The protein localises to the centriole. The protein resides in the cilium basal body. It localises to the cilium axoneme. Its subcellular location is the flagellum axoneme. May play a role in the regulation of cilium length. Stabilizes microtubules at low temperature. The protein is Stabilizer of axonemal microtubules 1 (SAXO1) of Macaca fascicularis (Crab-eating macaque).